The chain runs to 268 residues: Hydroxyacylglutathione hydrolase (268 aa).

Zn(2+) is bound by residues His56, His58, Asp60, His61, His113, Asp130, and His168.

Belongs to the metallo-beta-lactamase superfamily. Glyoxalase II family. As to quaternary structure, monomer. Zn(2+) serves as cofactor.

It catalyses the reaction an S-(2-hydroxyacyl)glutathione + H2O = a 2-hydroxy carboxylate + glutathione + H(+). It functions in the pathway secondary metabolite metabolism; methylglyoxal degradation; (R)-lactate from methylglyoxal: step 2/2. Functionally, thiolesterase that catalyzes the hydrolysis of S-D-lactoyl-glutathione to form glutathione and D-lactic acid. In Hydrogenovibrio crunogenus (strain DSM 25203 / XCL-2) (Thiomicrospira crunogena), this protein is Hydroxyacylglutathione hydrolase.